The primary structure comprises 586 residues: Solute carrier family 13 member 2 (586 aa).

The next 3 helical transmembrane spans lie at 13–33, 53–73, and 86–106; these read SYLIVLCLPIFLLPLPLIVQT, ALPLAVTALFPIILFPLMGIM, and TNILFVGGLMVAIAVEHWNLH. Residues 165-175 show a composition bias toward polar residues; that stretch reads DVEEGNSNPSF. The interval 165-209 is disordered; the sequence is DVEEGNSNPSFELQEASPQKEETKLDNGQAVSVSSEPRAQKTKEH. Transmembrane regions (helical) follow at residues 215 to 235, 264 to 284, 319 to 339, 366 to 386, 407 to 427, 445 to 465, 478 to 498, 506 to 526, and 535 to 555; these read GLSLCICYSASIGGIATLTGT, FAFPTMVILLLLAWLWLQVLF, PMSFAEKAVTFLFVLLVVLWF, GTVAIFISLIMFIIPSKIPGL, TVNDKMPWNILILLGGGFALA, PLQHVPPSATVLILSLLVAIF, FLPILASMAQAICLHPLYVML, LAFMLPVATPPNAIVFSFGGL, and GFLLNIIGVLTITLSINSWSI.

This sequence belongs to the SLC13A/DASS transporter (TC 2.A.47) family. NADC subfamily. In terms of tissue distribution, highly expressed in kidney and small intestine. Not detectable in brain, heart, stomach and skeletal muscle.

It localises to the apical cell membrane. The catalysed reaction is succinate(out) + 3 Na(+)(out) = succinate(in) + 3 Na(+)(in). It carries out the reaction fumarate(out) + 3 Na(+)(out) = fumarate(in) + 3 Na(+)(in). It catalyses the reaction 2-oxoglutarate(out) + 3 Na(+)(out) = 2-oxoglutarate(in) + 3 Na(+)(in). Li(+) decreases succinate transport in the presence of Na(+), by competing at one of the three cation binding sites. Its function is as follows. Low-affinity sodium-dicarboxylate cotransporter, that mediates the entry of citric acid cycle intermediates, such as succinate, citrate, fumarate and alpha-ketoglutarate (2-oxoglutarate) into the small intestine and renal proximal tubule. Can transport citrate in a Na(+)-dependent manner, recognizing the divalent form of citrate rather than the trivalent form which is normally found in blood. Transports the dicarboxylate into the cell with a probable stoichiometry of 3 Na(+) for 1 divalent dicarboxylate, rendering the process electrogenic. Has a critical role in renal dicarboxylate transport. In Mus musculus (Mouse), this protein is Solute carrier family 13 member 2 (Slc13a2).